Consider the following 1132-residue polypeptide: Telomerase reverse transcriptase (1132 aa).

The RNA-interacting domain 1 stretch occupies residues 1 to 230 (MPRAPRCRAV…ARRRGGSASR (230 aa)). Positions 58–197 (VPWDARPPPA…PHASGPRRRL (140 aa)) are GQ motif. A required for regulating specificity for telomeric DNA and for processivity for primer elongation region spans residues 137–141 (WGLLL). Residues 210-320 (AGVPLGLPAP…SRPPRPWDTP (111 aa)) form a disordered region. Residues 213 to 234 (PLGLPAPGARRRGGSASRSLPL) show a composition bias toward low complexity. The Bipartite nuclear localization signal signature appears at 222–240 (RRRGGSASRSLPLPKRPRR). Residue Ser-227 is modified to Phosphoserine; by PKB/AKT1. The tract at residues 231 to 324 (SLPLPKRPRR…RPWDTPCPPV (94 aa)) is linker. A compositionally biased stretch (basic residues) spans 293–304 (RHSHPSVGRQHH). The tract at residues 301 to 538 (RQHHAGPPST…VPAAEHRLRE (238 aa)) is required for oligomerization. Residues 310–320 (TSRPPRPWDTP) are compositionally biased toward pro residues. The tract at residues 325–550 (YAETKHFLYS…LAKFLHWLMS (226 aa)) is RNA-interacting domain 2. A TFLY; involved in RNA binding motif is present at residues 328-333 (TKHFLY). The tract at residues 376 to 521 (PRRLPRLPQR…MSVRDCAWLR (146 aa)) is QFP motif. Residues 397–417 (LGNHAQCPYGVLLKTHCPLRA) are CP motif. At Ser-457 the chain carries Phosphoserine; by DYRK2. Positions 605–935 (EVRQHREARP…GLFPWCGLLL (331 aa)) constitute a Reverse transcriptase domain. Tyr-707 carries the post-translational modification Phosphotyrosine; by SRC-type Tyr-kinases. 3 residues coordinate Mg(2+): Asp-712, Asp-868, and Asp-869. The interval 914–928 (LGGTAFVQMPAHGLF) is required for oligomerization. The segment at 930-934 (WCGLL) is primer grip sequence. The tract at residues 936-1132 (DTRTLEVQSD…LPSDFKTILD (197 aa)) is CTE.

It belongs to the reverse transcriptase family. Telomerase subfamily. As to quaternary structure, catalytic component of the telomerase holoenzyme complex composed of one molecule of TERT, one molecule of WRAP53/TCAB1, two molecules of H/ACA ribonucleoprotein complex subunits DKC1, NOP10, NHP2 and GAR1, and a telomerase RNA template component (TERC). The telomerase holoenzyme complex is associated with TEP1, SMG6/EST1A and POT1. The molecular chaperone HSP90/P23 complex is required for correct assembly and stabilization of the active telomerase. Interacts directly with HSP90A and PTGES3. Interacts with HSPA1A; the interaction occurs in the absence of TERC and dissociates once the complex has formed. Interacts with RAN; the interaction promotes nuclear export of TERT. Interacts with XPO1. Interacts with PTPN11; the interaction retains TERT in the nucleus. Interacts with NCL (via RRM1 and C-terminal RRM4/Arg/Gly-rich domains); the interaction is important for nucleolar localization of TERT. Interacts with SMARCA4 (via the bromodomain); the interaction regulates Wnt-mediated signaling. Interacts with MCRS1 (isoform MCRS2); the interaction inhibits in vitro telomerase activity. Interacts with PIF1; the interaction has no effect on the elongation activity of TERT. Interacts with PML; the interaction recruits TERT to PML bodies and inhibits telomerase activity. Interacts with GNL3L. Interacts with isoform 1 and isoform 2 of NVL. Interacts with DHX36. Interacts with ATF7. Phosphorylation at Tyr-707 under oxidative stress leads to translocation of TERT to the cytoplasm and reduces its antiapoptotic activity. Dephosphorylated by SHP2/PTPN11 leading to nuclear retention. Phosphorylation at Ser-227 by the AKT pathway promotes nuclear location. Phosphorylation at the G2/M phase at Ser-457 by DYRK2 promotes ubiquitination by the EDVP complex and degradation. Post-translationally, ubiquitinated by the EDVP complex, a E3 ligase complex following phosphorylation at Ser-457 by DYRK2. Ubiquitinated leads to proteasomal degradation. In terms of processing, (Microbial infection) In case of infection by HIV-1, the EDVP complex is hijacked by HIV-1 via interaction between HIV-1 Vpr and DCAF1/VPRBP, leading to ubiquitination and degradation. As to expression, expressed at a high level in thymocyte subpopulations, at an intermediate level in tonsil T-lymphocytes, and at a low to undetectable level in peripheral blood T-lymphocytes.

The protein resides in the nucleus. Its subcellular location is the nucleolus. It is found in the nucleoplasm. The protein localises to the chromosome. It localises to the telomere. The protein resides in the cytoplasm. Its subcellular location is the PML body. It catalyses the reaction DNA(n) + a 2'-deoxyribonucleoside 5'-triphosphate = DNA(n+1) + diphosphate. Its function is as follows. Telomerase is a ribonucleoprotein enzyme essential for the replication of chromosome termini in most eukaryotes. Active in progenitor and cancer cells. Inactive, or very low activity, in normal somatic cells. Catalytic component of the teleromerase holoenzyme complex whose main activity is the elongation of telomeres by acting as a reverse transcriptase that adds simple sequence repeats to chromosome ends by copying a template sequence within the RNA component of the enzyme. Catalyzes the RNA-dependent extension of 3'-chromosomal termini with the 6-nucleotide telomeric repeat unit, 5'-TTAGGG-3'. The catalytic cycle involves primer binding, primer extension and release of product once the template boundary has been reached or nascent product translocation followed by further extension. More active on substrates containing 2 or 3 telomeric repeats. Telomerase activity is regulated by a number of factors including telomerase complex-associated proteins, chaperones and polypeptide modifiers. Modulates Wnt signaling. Plays important roles in aging and antiapoptosis. The sequence is that of Telomerase reverse transcriptase (TERT) from Homo sapiens (Human).